Consider the following 184-residue polypeptide: ATP synthase subunit b, chloroplastic (184 aa).

The chain crosses the membrane as a helical span at residues 27 to 49 (LATNPINLSVVLGVLIFFGKGVL).

It belongs to the ATPase B chain family. In terms of assembly, F-type ATPases have 2 components, F(1) - the catalytic core - and F(0) - the membrane proton channel. F(1) has five subunits: alpha(3), beta(3), gamma(1), delta(1), epsilon(1). F(0) has four main subunits: a(1), b(1), b'(1) and c(10-14). The alpha and beta chains form an alternating ring which encloses part of the gamma chain. F(1) is attached to F(0) by a central stalk formed by the gamma and epsilon chains, while a peripheral stalk is formed by the delta, b and b' chains.

The protein localises to the plastid. It is found in the chloroplast thylakoid membrane. In terms of biological role, f(1)F(0) ATP synthase produces ATP from ADP in the presence of a proton or sodium gradient. F-type ATPases consist of two structural domains, F(1) containing the extramembraneous catalytic core and F(0) containing the membrane proton channel, linked together by a central stalk and a peripheral stalk. During catalysis, ATP synthesis in the catalytic domain of F(1) is coupled via a rotary mechanism of the central stalk subunits to proton translocation. Component of the F(0) channel, it forms part of the peripheral stalk, linking F(1) to F(0). The sequence is that of ATP synthase subunit b, chloroplastic from Nicotiana sylvestris (Wood tobacco).